A 318-amino-acid chain; its full sequence is MGRYCGLVNDTSPSRYVVVVTHATRDDAFDAAAEFISEMAGRDIGCAVPDDQAKPMSSKLPGIDLESLGEFAHEAEVVVVFGGDGTILRAAEWSLPRHVPMIGVNLGHVGFLAELERSDMADLVNKVCSRDYTVEDRLVLKTTVTEHSGQHRWSSFAVNELSLEKAARRRMLDVLASVDELPVQRWSCDGILVSTPTGSTAYAFSAGGPVMWPDLDAMLMVPLSAHALFARPLVMSPAARVDLDIQPDGSESAVLWCDGRRSCTVRPGERITVVRHPDRLRIARLAAQPFTSRLVKKFELPVSGWRQGRDRHHLEETS.

Aspartate 84 serves as the catalytic Proton acceptor. Residues 84-85 (DG), arginine 89, 159-160 (NE), arginine 170, aspartate 189, and 200-205 (TAYAFS) contribute to the NAD(+) site.

This sequence belongs to the NAD kinase family. A divalent metal cation is required as a cofactor.

It is found in the cytoplasm. The enzyme catalyses NAD(+) + ATP = ADP + NADP(+) + H(+). Its function is as follows. Involved in the regulation of the intracellular balance of NAD and NADP, and is a key enzyme in the biosynthesis of NADP. Catalyzes specifically the phosphorylation on 2'-hydroxyl of the adenosine moiety of NAD to yield NADP. The chain is NAD kinase from Cutibacterium acnes (strain DSM 16379 / KPA171202) (Propionibacterium acnes).